A 397-amino-acid chain; its full sequence is Serine/threonine-protein kinase 17A (397 aa).

Residues 1–23 are disordered; that stretch reads MIPLEKPGSGGSPSAAASGSGPG. Position 9 is a phosphoserine (Ser9). A Protein kinase domain is found at 44–304; it reads LSPGRELGRG…AEECLKHPWL (261 aa). Residues 50-58 and Lys73 contribute to the ATP site; that span reads LGRGKFAVV. The Proton acceptor role is filled by Asp169.

This sequence belongs to the protein kinase superfamily. CAMK Ser/Thr protein kinase family. DAP kinase subfamily. Autophosphorylated. Highly expressed in bone marrow. Lower levels in brain, heart, lung, liver and kidney.

Its subcellular location is the nucleus. It catalyses the reaction L-seryl-[protein] + ATP = O-phospho-L-seryl-[protein] + ADP + H(+). It carries out the reaction L-threonyl-[protein] + ATP = O-phospho-L-threonyl-[protein] + ADP + H(+). Inhibited by thiazolidinedione-type compounds: inhibited by furan- and pyridone- thiazolidinediones. In terms of biological role, acts as a positive regulator of apoptosis. May also act as a regulator of cellular reactive oxygen species. The protein is Serine/threonine-protein kinase 17A (STK17A) of Oryctolagus cuniculus (Rabbit).